A 514-amino-acid polypeptide reads, in one-letter code: Peptide chain release factor 3 (514 aa).

In terms of domain architecture, tr-type G spans 8-268 (KKRRTFAIIS…TFLEFAPEPH (261 aa)). GTP-binding positions include 17 to 24 (SHPDAGKT), 85 to 89 (DTPGH), and 139 to 142 (NKLD).

Belongs to the TRAFAC class translation factor GTPase superfamily. Classic translation factor GTPase family. PrfC subfamily.

The protein localises to the cytoplasm. Increases the formation of ribosomal termination complexes and stimulates activities of RF-1 and RF-2. It binds guanine nucleotides and has strong preference for UGA stop codons. It may interact directly with the ribosome. The stimulation of RF-1 and RF-2 is significantly reduced by GTP and GDP, but not by GMP. This chain is Peptide chain release factor 3, found in Streptococcus pyogenes serotype M18 (strain MGAS8232).